Here is a 126-residue protein sequence, read N- to C-terminus: 3-aminobutyryl-CoA ammonia lyase (126 aa).

This sequence belongs to the KAL family. In terms of assembly, homohexamer.

The catalysed reaction is (3S)-3-aminobutanoyl-CoA = (2E)-butenoyl-CoA + NH4(+). The protein operates within amino-acid degradation; L-lysine degradation via acetate pathway. Its function is as follows. Involved in the anaerobic fermentation of lysine. Catalyzes the deamination of L-3-aminobutyryl-CoA to produce crotonoyl-CoA. This is 3-aminobutyryl-CoA ammonia lyase from Acetoanaerobium sticklandii (strain ATCC 12662 / DSM 519 / JCM 1433 / CCUG 9281 / NCIMB 10654 / HF) (Clostridium sticklandii).